Reading from the N-terminus, the 54-residue chain is Ribulose bisphosphate carboxylase large chain (54 aa).

The propeptide occupies 1–2; sequence MS. The residue at position 3 (P3) is an N-acetylproline. K14 is subject to N6,N6,N6-trimethyllysine.

The protein belongs to the RuBisCO large chain family. Type I subfamily. As to quaternary structure, heterohexadecamer of 8 large chains and 8 small chains.

The protein resides in the plastid. It is found in the chloroplast. It carries out the reaction 2 (2R)-3-phosphoglycerate + 2 H(+) = D-ribulose 1,5-bisphosphate + CO2 + H2O. The enzyme catalyses D-ribulose 1,5-bisphosphate + O2 = 2-phosphoglycolate + (2R)-3-phosphoglycerate + 2 H(+). Its function is as follows. RuBisCO catalyzes two reactions: the carboxylation of D-ribulose 1,5-bisphosphate, the primary event in carbon dioxide fixation, as well as the oxidative fragmentation of the pentose substrate in the photorespiration process. Both reactions occur simultaneously and in competition at the same active site. This chain is Ribulose bisphosphate carboxylase large chain (rbcL), found in Rhamnus cathartica (Common buckthorn).